Consider the following 545-residue polypeptide: Glucose-6-phosphate isomerase (545 aa).

The active-site Proton donor is the glutamate 351. Active-site residues include histidine 382 and lysine 510.

The protein belongs to the GPI family.

It localises to the cytoplasm. The catalysed reaction is alpha-D-glucose 6-phosphate = beta-D-fructose 6-phosphate. It functions in the pathway carbohydrate biosynthesis; gluconeogenesis. The protein operates within carbohydrate degradation; glycolysis; D-glyceraldehyde 3-phosphate and glycerone phosphate from D-glucose: step 2/4. Its function is as follows. Catalyzes the reversible isomerization of glucose-6-phosphate to fructose-6-phosphate. The chain is Glucose-6-phosphate isomerase from Shewanella loihica (strain ATCC BAA-1088 / PV-4).